The primary structure comprises 609 residues: Granule-bound starch synthase 1, chloroplastic/amyloplastic (609 aa).

A chloroplast-targeting transit peptide spans 1–77 (MSALTTSQLA…SRRFPSVVVY (77 aa)). A disordered region spans residues 29 to 67 (RHGFQGLKPRSPAGGDATSLSVTTSARATPKQQRSVQRG). A compositionally biased stretch (polar residues) spans 46 to 66 (TSLSVTTSARATPKQQRSVQR). Lysine 97 contacts ADP-alpha-D-glucose.

It belongs to the glycosyltransferase 1 family. Bacterial/plant glycogen synthase subfamily.

It is found in the plastid. The protein resides in the chloroplast. Its subcellular location is the amyloplast. It catalyses the reaction an NDP-alpha-D-glucose + [(1-&gt;4)-alpha-D-glucosyl](n) = [(1-&gt;4)-alpha-D-glucosyl](n+1) + a ribonucleoside 5'-diphosphate + H(+). It functions in the pathway glycan biosynthesis; starch biosynthesis. Required for the synthesis of amylose in endosperm. The polypeptide is Granule-bound starch synthase 1, chloroplastic/amyloplastic (WAXY) (Oryza glaberrima (African rice)).